Consider the following 638-residue polypeptide: Chaperone protein HtpG (638 aa).

An a; substrate-binding region spans residues 1 to 343; it reads MTSTIDSDGA…SADLPLNISR (343 aa). The b stretch occupies residues 344–557; sequence EMIQESPILA…ESGPDRQLEK (214 aa). The c stretch occupies residues 558 to 638; that stretch reads ILVGVGQLTG…VERGLRGSTA (81 aa).

Belongs to the heat shock protein 90 family. Homodimer.

The protein localises to the cytoplasm. Its function is as follows. Molecular chaperone. Has ATPase activity. This chain is Chaperone protein HtpG, found in Nitrobacter hamburgensis (strain DSM 10229 / NCIMB 13809 / X14).